Here is a 1025-residue protein sequence, read N- to C-terminus: Putative receptor-like protein kinase At3g47110 (1025 aa).

Positions 1–30 (MGVPCIVMRLILVSALLVSVSLEHSDMVCA) are cleaved as a signal peptide. Residues 31 to 653 (QTIRLTEETD…LPRRHSSVRK (623 aa)) lie on the Extracellular side of the membrane. N-linked (GlcNAc...) asparagine glycans are attached at residues N63 and N103. LRR repeat units follow at residues 104–128 (LSFL…VGNL), 130–151 (RLQY…VLSN), 152–175 (CSSL…EFGS), 176–200 (LSKL…LGNL), 202–224 (SLQM…IARL), 226–248 (QMIF…IYNL), 249–271 (SSLI…DFGS), 273–297 (LPNL…LSNI), 298–323 (SSLR…RLQN), and 325–344 (LLLG…DLDF). N-linked (GlcNAc...) asparagine glycans are attached at residues N135 and N151. 2 N-linked (GlcNAc...) asparagine glycosylation sites follow: N188 and N199. N-linked (GlcNAc...) asparagine glycosylation occurs at N247. N296 carries an N-linked (GlcNAc...) asparagine glycan. N331, N336, N350, and N374 each carry an N-linked (GlcNAc...) asparagine glycan. 11 LRR repeats span residues 351 to 374 (CSQL…FIAN), 376 to 400 (STQL…IGNL), 401 to 424 (VSLQ…LGEL), 426 to 448 (ELRK…LGNI), 449 to 472 (SGLT…LGSC), 473 to 496 (SYLL…LMEL), 498 to 520 (SLVV…IGKL), 521 to 544 (KFLL…LANC), 546 to 567 (SLEF…IRGL), 568 to 593 (TGLR…NFSK), and 595 to 616 (QNLN…VFRN). N-linked (GlcNAc...) asparagine glycosylation is found at N447, N458, N486, and N503. N-linked (GlcNAc...) asparagine glycosylation is found at N579, N590, N598, and N616. A helical membrane pass occupies residues 654–674 (IITICVSAVMAALLLLCLCVV). Residues 675–1025 (YLCWYKLRVK…RESFFRDEET (351 aa)) lie on the Cytoplasmic side of the membrane. A Phosphothreonine modification is found at T716. The 302-residue stretch at 719–1020 (FSSSNLIGSG…KLVSIRESFF (302 aa)) folds into the Protein kinase domain. ATP-binding positions include 725 to 733 (IGSGNFGAV) and K748. Phosphotyrosine occurs at positions 798 and 843. Catalysis depends on D856, which acts as the Proton acceptor. Y904 carries the phosphotyrosine modification.

It belongs to the protein kinase superfamily. Ser/Thr protein kinase family.

The protein resides in the cell membrane. It carries out the reaction L-seryl-[protein] + ATP = O-phospho-L-seryl-[protein] + ADP + H(+). The enzyme catalyses L-threonyl-[protein] + ATP = O-phospho-L-threonyl-[protein] + ADP + H(+). The sequence is that of Putative receptor-like protein kinase At3g47110 from Arabidopsis thaliana (Mouse-ear cress).